The following is a 152-amino-acid chain: uncharacterized protein (152 aa).

This is an uncharacterized protein from Homo sapiens (Human).